The sequence spans 460 residues: MTIFQKSFILLIIWNFSLFAFSDMKIEITHGINTAHPIAVIPFINNENITHELNNDNIEDIASIIAADLRNSGKFNTLPIAYLPYQPSKLTDIIPTFWEKLGINTVVLGAINIKNENYVISYQLIDTSNNPALVILDNQYEIEKKHLRYTAHTISDEIFEKLTGIKGVFCTRIAYILYTNNIKYAYELCTSDYDGHNQVSICRSSEPLMSPAWSPDGKKLAYVTFASGHSELIIQTLTNRSIDNIIQFPNHNGAPAWSPDGKKLAFSLSKTGSLNLYIMDLSSNNIQQITSNRYNNTEPSWFPDSQNLAYTSDQGGVPQVYKININNNRDSHRISWLNGSNQKPNISMDGTFMVMVNRNKGKQYISKLNFLTGEEETLTADSVLADTPSISPNGIMFMYSSIILNNSSSELYLDKKFTNIPDNNQSILSLASIDGKFKAHLNGSTGSIRFPTWSSLSCSY.

A signal peptide spans 1 to 22 (MTIFQKSFILLIIWNFSLFAFS).

This sequence belongs to the TolB family. As to quaternary structure, the Tol-Pal system is composed of five core proteins: the inner membrane proteins TolA, TolQ and TolR, the periplasmic protein TolB and the outer membrane protein Pal. They form a network linking the inner and outer membranes and the peptidoglycan layer.

Its subcellular location is the periplasm. Its function is as follows. Part of the Tol-Pal system, which plays a role in outer membrane invagination during cell division and is important for maintaining outer membrane integrity. TolB occupies a key intermediary position in the Tol-Pal system because it communicates directly with both membrane-embedded components, Pal in the outer membrane and TolA in the inner membrane. The protein is Tol-Pal system protein TolB of Blochmanniella floridana.